Reading from the N-terminus, the 884-residue chain is Receptor-like protein 39 (884 aa).

An N-terminal signal peptide occupies residues 1 to 24 (MSELLFRLNFLLLLLLSCVSLASS). At 25 to 847 (FFSFNDPVVG…EEEEQVLNWK (823 aa)) the chain is on the extracellular side. Residues Asn59, Asn71, and Asn92 are each glycosylated (N-linked (GlcNAc...) asparagine). LRR repeat units lie at residues 98–122 (FHQLRHLYLSYNNFTPSSIPSEFGM), 124–146 (NKLEVLFMSTGGFLGQVPSSFSN), 147–170 (LSMLSALLLHHNELTGSLSFVRNL), 171–196 (RKLTILDVSHNHFSGTLNPNSSLFEL), 197–223 (HNLAYLDLGSNNFTSSSLPYEFGNLNK), 225–245 (ELLDVSSNSFFGQVPPTISNL), 246–268 (TQLTELYLPLNDFTGSLPLVQNL), 269–292 (TKLSILHLSDNHFSGTIPSSLFTM), 294–318 (FLSYLDLGGNNLSGSIEVPNSSLSS), and 320–344 (LENLNLGENHFEGKIIEPISKLINL). Asn146 carries an N-linked (GlcNAc...) asparagine glycan. 4 N-linked (GlcNAc...) asparagine glycosylation sites follow: Asn190, Asn208, Asn244, and Asn267. 2 N-linked (GlcNAc...) asparagine glycosylation sites follow: Asn304 and Asn313. Residues 345-365 (KELHLSFLNTSYPINLKLFSS) form an LRR 11; degenerate repeat. A glycan (N-linked (GlcNAc...) asparagine) is linked at Asn353. LRR repeat units lie at residues 366–391 (LKYLLLLDLSGGWISQASLSLDSYIP), 392–413 (STLEALLLKHCNISVFPNILKT), 414–438 (LPNLEFIALSTNKISGKIPEWLWSL), 440–463 (RLSSVFIEENLFTGFEGSSEILVN), and 464–487 (SSVRILNLLSNNLEGALPHLPLSV). Asn403 carries an N-linked (GlcNAc...) asparagine glycan. N-linked (GlcNAc...) asparagine glycosylation is present at Asn463. The LRR 17; degenerate repeat unit spans residues 488 to 507 (NYFSARNNRYGGDIPLSICS). LRR repeat units lie at residues 508–529 (RRSLVFLDLSYNNFTGPIPPCP), 530–553 (SNFLILNLRKNNLEGSIPDTYYAD), 554–577 (APLRSLDVGYNRLTGKLPRSLLNC), 579–601 (ALQFLSVDHNGIKDTFPFSLKAL), 602–625 (PKLQVLILHSNNFYGPLSPPNQGS), 628–652 (FPELRILEIAGNKFTGSLPPDFFEN), 702–725 (SSSATIDFSGNRLEGEIPESIGLL), 726–749 (KALIALNLSNNAFTGHIPLSLANL), 750–773 (KKIESLDLSSNQLSGTIPNGIGTL), and 775–798 (FLAYMNVSHNQLNGEIPQGTQITG). N-linked (GlcNAc...) asparagine glycosylation occurs at Asn520. N-linked (GlcNAc...) asparagine glycosylation occurs at Asn576. A glycan (N-linked (GlcNAc...) asparagine) is linked at Asn732. An N-linked (GlcNAc...) asparagine glycan is attached at Asn780. The helical transmembrane segment at 848 to 868 (GVGIGYGVGVLLGLAIAQLIA) threads the bilayer. The Cytoplasmic segment spans residues 869 to 884 (SYKPEWLVFLFQSRNH).

This sequence belongs to the RLP family.

Its subcellular location is the cell membrane. The protein is Receptor-like protein 39 of Arabidopsis thaliana (Mouse-ear cress).